We begin with the raw amino-acid sequence, 465 residues long: MVRVRFAPSPTGHLHIGGARTALFNWLFARHHNGKFILRIEDTDRSRSTEEYIESIIEAMKWLGLDWDEGPFRQTDRMEVYKAYAYKLLEEGKAYRCYCTPEELEERRQQAMKEGKPPRYDRRCREIKETLNKPFAIRFKMPLEGETVVDDLVKGKVTFKNSEIEDLVILRSDGTPTYNFCVVVDDFEMGITHVIRGEDHLNNTPKQIHIYHALGMNPPEFAHIPMILGTDRARLSKRHGATSVLSYRDEGYLSDALVNFLARLGWSYGDKEIFTREELIKYFNLEQVGKANAVFNAEKLLWLNSEYIKLTPEEKLFELVKPFLIKEGYLKEGETLDKDWACRAIKSLKERCRTLKELAHAMRYYLLDYVEIEPKAKEKYINAETVPVLREVTEKLAALEEFTQERIEKIFMDIVNEKGLKLGQVAQPVRVVMTGSTVSPGIYEVLEIAGKEKTLKRLRRVIDAS.

Positions 8-18 match the 'HIGH' region motif; the sequence is PSPTGHLHIGG. Residues Cys-97, Cys-99, Cys-124, and Glu-126 each coordinate Zn(2+). A 'KMSKS' region motif is present at residues 234-238; it reads RLSKR. Lys-237 serves as a coordination point for ATP.

This sequence belongs to the class-I aminoacyl-tRNA synthetase family. Glutamate--tRNA ligase type 1 subfamily. Monomer. Requires Zn(2+) as cofactor.

The protein localises to the cytoplasm. The enzyme catalyses tRNA(Glu) + L-glutamate + ATP = L-glutamyl-tRNA(Glu) + AMP + diphosphate. Catalyzes the attachment of glutamate to tRNA(Glu) in a two-step reaction: glutamate is first activated by ATP to form Glu-AMP and then transferred to the acceptor end of tRNA(Glu). The polypeptide is Glutamate--tRNA ligase (Thermodesulfovibrio yellowstonii (strain ATCC 51303 / DSM 11347 / YP87)).